A 151-amino-acid chain; its full sequence is Small ribosomal subunit protein uS15 (151 aa).

The protein belongs to the universal ribosomal protein uS15 family.

The protein is Small ribosomal subunit protein uS15 (RPS13) of Lumbricus rubellus (Humus earthworm).